A 434-amino-acid polypeptide reads, in one-letter code: MQITLSNTLANDAWGKNAILSFDSNKAMIHLKNNGKTDRTLVQQAARKLRGQGIKEVELVGEKWDLEFCWAFYQGFYTAKQDYAIEFPHLDDEPQDELLARIECGDFVRGIINEPAQSLTPVKLVERAAEFILNQADIYNEKSAVSFKIISGEELEQQGYHGIWTVGKGSANLPAMLQLDFNPTQDSNAPVLACLVGKGITFDSGGYSIKPSDGMSTMRTDMGGAALLTGALGFAIARGLNQRVKLYLCCAENLVSNNAFKLGDIITYKNGVSAEVLNTDAEGRLVLADGLIEADNQNPGFIIDCATLTGAAKSAVGNDYHSVLSMDDELVKNLFQSAQAENEPFWRLPFEDFHRSQINSSFADIANIGSVPVGAGASTATAFLSYFVKNYKQNWLHIDCSATYRKSGSDLWSVGATGIGVQTLANLMLSRSLK.

Lys-198 and Asp-203 together coordinate Mn(2+). Residue Lys-210 is part of the active site. Positions 221, 280, and 282 each coordinate Mn(2+). Arg-284 is a catalytic residue.

Belongs to the peptidase M17 family. Homohexamer. Mn(2+) serves as cofactor.

The protein localises to the cytoplasm. The catalysed reaction is Release of an N-terminal amino acid, Xaa, from a peptide or arylamide. Xaa is preferably Glu or Asp but may be other amino acids, including Leu, Met, His, Cys and Gln.. In terms of biological role, probably plays an important role in intracellular peptide degradation. In Haemophilus influenzae (strain ATCC 51907 / DSM 11121 / KW20 / Rd), this protein is Putative peptidase B.